The following is a 427-amino-acid chain: Dihydrofolate synthetase (427 aa).

ATP is bound at residue 34–37; sequence GKGS. Residues Glu123 and His153 each coordinate Mg(2+). ATP is bound by residues Arg275 and Asp296.

The protein belongs to the folylpolyglutamate synthase family.

Its subcellular location is the cytoplasm. The catalysed reaction is 7,8-dihydropteroate + L-glutamate + ATP = 7,8-dihydrofolate + ADP + phosphate + H(+). It functions in the pathway cofactor biosynthesis; tetrahydrofolylpolyglutamate biosynthesis. In terms of biological role, glutamate-adding enzyme which catalyzes the binding of the first glutamyl side chain to dihydropteroate. Leads to the de nove synthesis of tetrahydrofolate. This chain is Dihydrofolate synthetase (FOL3), found in Saccharomyces cerevisiae (strain ATCC 204508 / S288c) (Baker's yeast).